The sequence spans 457 residues: Arginine biosynthesis bifunctional protein ArgJ, mitochondrial (457 aa).

Residues threonine 184, lysine 213, threonine 224, glutamate 312, asparagine 452, and threonine 457 each coordinate substrate. Threonine 224 (nucleophile) is an active-site residue.

It belongs to the ArgJ family. As to quaternary structure, heterodimer of an alpha and a beta chain. The alpha and beta chains are autoproteolytically processed from a single precursor protein within the mitochondrion.

It is found in the mitochondrion matrix. It catalyses the reaction N(2)-acetyl-L-ornithine + L-glutamate = N-acetyl-L-glutamate + L-ornithine. The catalysed reaction is L-glutamate + acetyl-CoA = N-acetyl-L-glutamate + CoA + H(+). Its pathway is amino-acid biosynthesis; L-arginine biosynthesis; L-ornithine and N-acetyl-L-glutamate from L-glutamate and N(2)-acetyl-L-ornithine (cyclic): step 1/1. It participates in amino-acid biosynthesis; L-arginine biosynthesis; N(2)-acetyl-L-ornithine from L-glutamate: step 1/4. Its function is as follows. Catalyzes two activities which are involved in the cyclic version of arginine biosynthesis: the synthesis of acetylglutamate from glutamate and acetyl-CoA, and of ornithine by transacetylation between acetylornithine and glutamate. The protein is Arginine biosynthesis bifunctional protein ArgJ, mitochondrial of Aspergillus terreus (strain NIH 2624 / FGSC A1156).